The following is an 81-amino-acid chain: Small ribosomal subunit protein bS18 (81 aa).

This sequence belongs to the bacterial ribosomal protein bS18 family. In terms of assembly, part of the 30S ribosomal subunit. Forms a tight heterodimer with protein bS6.

Binds as a heterodimer with protein bS6 to the central domain of the 16S rRNA, where it helps stabilize the platform of the 30S subunit. In Chloroflexus aurantiacus (strain ATCC 29366 / DSM 635 / J-10-fl), this protein is Small ribosomal subunit protein bS18.